Reading from the N-terminus, the 690-residue chain is Serotransferrin (690 aa).

The signal sequence occupies residues 1–17 (MKPLLLLTLLGCLAAAL). Transferrin-like domains lie at 24-329 (VKWC…SLKK) and 340-670 (IKWC…SLRK). Residues C27 and C49 are joined by a disulfide bond. Residues D73 and Y103 each contribute to the Fe(3+) site. Disulfide bonds link C126/C206, C171/C185, and C234/C248. 4 residues coordinate hydrogencarbonate: T128, K132, A134, and G135. Y200 is a binding site for Fe(3+). Position 256 (H256) interacts with Fe(3+). Intrachain disulfides connect C343/C379 and C353/C370. Residues D394 and Y429 each contribute to the Fe(3+) site. Intrachain disulfides connect C404–C682, C419–C643, C452–C530, C476–C671, C486–C499, C496–C513, and C570–C584. Hydrogencarbonate-binding residues include T454, R458, A460, and G461. Y524 is a binding site for Fe(3+). Residue H592 coordinates Fe(3+).

This sequence belongs to the transferrin family. Monomer.

The protein resides in the secreted. Its function is as follows. Transferrins are iron binding transport proteins which can bind two Fe(3+) ions in association with the binding of an anion, usually bicarbonate. The chain is Serotransferrin (tf) from Oryzias latipes (Japanese rice fish).